The sequence spans 323 residues: Cyclin-dependent kinase 1 (323 aa).

The 303-residue stretch at 4-306 folds into the Protein kinase domain; that stretch reads YQKIEKIGEG…AKQACMHPYF (303 aa). ATP is bound by residues 10–18 and Lys34; that span reads IGEGTYGVV. Thr14 bears the Phosphothreonine mark. At Tyr15 the chain carries Phosphotyrosine. The active-site Proton acceptor is Asp147. A Phosphothreonine; by CAK modification is found at Thr180.

The protein belongs to the protein kinase superfamily. CMGC Ser/Thr protein kinase family. CDC2/CDKX subfamily. In terms of assembly, forms a stable but non-covalent complex with a regulatory subunit (SUC1) and with a cyclin.

It catalyses the reaction L-seryl-[protein] + ATP = O-phospho-L-seryl-[protein] + ADP + H(+). The enzyme catalyses L-threonyl-[protein] + ATP = O-phospho-L-threonyl-[protein] + ADP + H(+). With respect to regulation, phosphorylation at Thr-14 or Tyr-15 inactivates the enzyme, while phosphorylation at Thr-180 activates it. Functionally, cyclin-dependent kinase that acts as a master regulator of the mitotic and meiotic cell cycles. This is Cyclin-dependent kinase 1 from Emericella nidulans (strain FGSC A4 / ATCC 38163 / CBS 112.46 / NRRL 194 / M139) (Aspergillus nidulans).